The sequence spans 123 residues: UPF0102 protein Pcar_2217 (123 aa).

It belongs to the UPF0102 family.

This Syntrophotalea carbinolica (strain DSM 2380 / NBRC 103641 / GraBd1) (Pelobacter carbinolicus) protein is UPF0102 protein Pcar_2217.